A 241-amino-acid chain; its full sequence is Large ribosomal subunit protein uL13c (241 aa).

The transit peptide at 1 to 50 directs the protein to the chloroplast; it reads MAVLCSSSTVILSSSSVKSSGSERKSPFLGFSLTAISKPSVRVGIYANSK.

The protein belongs to the universal ribosomal protein uL13 family. In terms of assembly, part of the 50S ribosomal subunit.

The protein resides in the plastid. It localises to the chloroplast. This is Large ribosomal subunit protein uL13c (RPL13) from Arabidopsis thaliana (Mouse-ear cress).